The chain runs to 240 residues: Uridylate kinase (240 aa).

An ATP-binding site is contributed by 14–17; sequence KLSG. Position 56 (glycine 56) interacts with UMP. Residues glycine 57 and arginine 61 each coordinate ATP. Residues aspartate 76 and 137 to 144 contribute to the UMP site; that span reads TGNPFFTT. ATP contacts are provided by threonine 164, tyrosine 170, and aspartate 173.

The protein belongs to the UMP kinase family. Homohexamer.

The protein localises to the cytoplasm. It carries out the reaction UMP + ATP = UDP + ADP. It functions in the pathway pyrimidine metabolism; CTP biosynthesis via de novo pathway; UDP from UMP (UMPK route): step 1/1. Inhibited by UTP. Catalyzes the reversible phosphorylation of UMP to UDP. The protein is Uridylate kinase of Paracidovorax citrulli (strain AAC00-1) (Acidovorax citrulli).